A 184-amino-acid polypeptide reads, in one-letter code: Gastrokine-2 (184 aa).

Residues 1–20 (MKPLVAFLVVLSIFGIQSQA) form the signal peptide. Positions 54 to 151 (HSGSCSSTTI…LCKHMPLYEG (98 aa)) constitute a BRICHOS domain. A disulfide bridge links C81 with C143.

As to quaternary structure, heterodimer with TFF1; disulfide linked. Interacts with TFF2. As to expression, stomach foveolar epithelium and duodenal Brunner's glands.

Its subcellular location is the secreted. The protein localises to the golgi apparatus. The polypeptide is Gastrokine-2 (Gkn2) (Mus musculus (Mouse)).